Here is a 154-residue protein sequence, read N- to C-terminus: uncharacterized protein (154 aa).

Residues 23-43 form a helical membrane-spanning segment; the sequence is SAVALVTFAGAALSGVIPAIA.

It localises to the membrane. This is an uncharacterized protein from Mycobacterium tuberculosis (strain CDC 1551 / Oshkosh).